We begin with the raw amino-acid sequence, 408 residues long: uncharacterized protein (408 aa).

It belongs to the protein kinase superfamily. ADCK protein kinase family.

This is an uncharacterized protein from Synechocystis sp. (strain ATCC 27184 / PCC 6803 / Kazusa).